The sequence spans 248 residues: Oligo(A)/oligo(T)-binding protein (248 aa).

Residues 1–36 (MAKTLAQGRKPGSGRKPGKGKTLREGRKPGSGRRRR) mediate DNA binding. Disordered stretches follow at residues 1–127 (MAKT…LQQQ) and 219–248 (TAASNQPRTQPSPAAHITKNSDSTEKNATI). 3 consecutive repeat copies span residues 8-12 (GRKPG), 14-18 (GRKPG), and 26-30 (GRKPG). Residues 8-30 (GRKPGSGRKPGKGKTLREGRKPG) are 3 X 5 AA repeats of G-R-K-P-G. Positions 12 to 21 (GSGRKPGKGK) are enriched in basic residues. Residues 37 to 71 (QDTGGKETDGSQQDQESRLISSRDMEAVDALRELT) show a composition bias toward basic and acidic residues. Low complexity-rich tracts occupy residues 72 to 100 (HSPSSHSAHNSSAAPPPHAAAASTSLPPS) and 111 to 127 (QQQQQQQQQQQQLLQQQ).

As to quaternary structure, binds as a dimer or higher oligomer.

In terms of biological role, DNA-binding protein that recognizes oligo(A).oligo(T) tracts (A.T DNA). Can bind to any 11 bp sequence in which 10 bases conform to an uninterrupted oligo(A).oligo(T) tract. The polypeptide is Oligo(A)/oligo(T)-binding protein (DAT1) (Saccharomyces cerevisiae (strain ATCC 204508 / S288c) (Baker's yeast)).